A 358-amino-acid chain; its full sequence is Histamine H2 receptor (358 aa).

The Extracellular portion of the chain corresponds to 1 to 22 (MEPNGTVHSCCLDSMALKVTIS). Asn4 carries an N-linked (GlcNAc...) asparagine glycan. Residues 23–44 (VVLTTLILITIAGNVVVCLAVS) traverse the membrane as a helical segment. The Cytoplasmic portion of the chain corresponds to 45–57 (LNRRLRSLTNCFI). The chain crosses the membrane as a helical span at residues 58–81 (VSLAATDLLLGLLVLPFSAIYQLS). Topologically, residues 82-92 (FTWSFGHVFCN) are extracellular. Cys91 and Cys173 are oxidised to a cystine. Residues 93–114 (IYTSLDVMLCTASILNLFMISL) form a helical membrane-spanning segment. The Cytoplasmic segment spans residues 115–134 (DRYCAVTDPLRYPVLVTPVR). A helical transmembrane segment spans residues 135–159 (VAISLVFIWVISITLSFLSIHLGWN). Residues 160–179 (SRNGTRGGNDTFKCKVQVNE) lie on the Extracellular side of the membrane. Residues 180 to 203 (VYGLVDGLVTFYLPLLIMCVTYYR) form a helical membrane-spanning segment. Residues 204 to 233 (IFKIAREQAKRINHISSWKAATIREHKATV) lie on the Cytoplasmic side of the membrane. The chain crosses the membrane as a helical span at residues 234–257 (TLAAVMGAFIICWFPYFTAFVYRG). The Extracellular segment spans residues 258–266 (LRGDDAINE). A helical membrane pass occupies residues 267-288 (AVEGIVLWLGYANSALNPILYA). The Cytoplasmic segment spans residues 289 to 358 (ALNRDFRTAY…LTHPQGNPIR (70 aa)). Cys304 carries the S-palmitoyl cysteine lipid modification.

It belongs to the G-protein coupled receptor 1 family.

The protein resides in the cell membrane. The H2 subclass of histamine receptors mediates gastric acid secretion. The activity of this receptor is mediated by G proteins which activate adenylyl cyclase. The polypeptide is Histamine H2 receptor (Hrh2) (Rattus norvegicus (Rat)).